The following is a 249-amino-acid chain: Acidic leucine-rich nuclear phosphoprotein 32 family member A (249 aa).

Thr15 is subject to Phosphothreonine. The residue at position 17 (Ser17) is a Phosphoserine. LRR repeat units follow at residues 18–38 (DVKE…EGLT), 43–64 (ELEF…PKLN), 65–87 (KLKK…AEKC), and 89–110 (NLTH…EPLK). An LRRCT domain is found at 123–161 (CEVTNLNDYRENVFKLLPQLTYLDGYDRDDKEAPDSDAE). A compositionally biased stretch (basic and acidic residues) spans 147 to 156 (GYDRDDKEAP). A disordered region spans residues 147–249 (GYDRDDKEAP…EPEDEGEDDD (103 aa)). Residues 150–174 (RDDKEAPDSDAEGYVEGLDDDEEDE) form a necessary for tumor-suppressive function region. Residues 157-230 (DSDAEGYVEG…DEEDEEELGE (74 aa)) show a composition bias toward acidic residues. Ser158 and Ser204 each carry phosphoserine. Positions 165–249 (EGLDDDEEDE…EPEDEGEDDD (85 aa)) are interaction with E4F1.

The protein belongs to the ANP32 family. As to quaternary structure, component of the SET complex, composed of at least ANP32A, APEX1, HMGB2, NME1, SET and TREX1. Directly interacts with SET. Interacts with ATXN1/SCA1. Interacts with MAP1B. Interacts with ELAVL1. Part of the INHAT (inhibitor of histone acetyltransferases) complex. Interacts with E4F1. Post-translationally, the N-terminus is blocked. Phosphorylated on serine residues, at least in part by casein kinase 2/CK2. In terms of processing, some glutamate residues are glycylated by TTLL8. This modification occurs exclusively on glutamate residues and results in a glycine chain on the gamma-carboxyl group. In terms of tissue distribution, widely distributed in the central nervous system, with an abundant expression in the cerebellum.

The protein resides in the nucleus. It localises to the cytoplasm. It is found in the endoplasmic reticulum. Multifunctional protein that is involved in the regulation of many processes including tumor suppression, apoptosis, cell cycle progression or transcription. Promotes apoptosis by favouring the activation of caspase-9/CASP9 and allowing apoptosome formation. In addition, plays a role in the modulation of histone acetylation and transcription as part of the INHAT (inhibitor of histone acetyltransferases) complex. Inhibits the histone-acetyltranferase activity of EP300/CREBBP (CREB-binding protein) and EP300/CREBBP-associated factor by histone masking. Preferentially binds to unmodified histone H3 and sterically inhibiting its acetylation and phosphorylation leading to cell growth inhibition. Participates in other biochemical processes such as regulation of mRNA nuclear-to-cytoplasmic translocation and stability by its association with ELAVL1 (Hu-antigen R). Plays a role in E4F1-mediated transcriptional repression as well as inhibition of protein phosphatase 2A. This Bos taurus (Bovine) protein is Acidic leucine-rich nuclear phosphoprotein 32 family member A (ANP32A).